We begin with the raw amino-acid sequence, 162 residues long: Protein NrdI (162 aa).

The protein belongs to the NrdI family.

Its function is as follows. Probably involved in ribonucleotide reductase function. The protein is Protein NrdI of Streptococcus pyogenes serotype M28 (strain MGAS6180).